Here is a 748-residue protein sequence, read N- to C-terminus: Probable transcriptional regulator SLK1 (748 aa).

2 disordered regions span residues 67-93 and 138-163; these read QHLP…RENN and QQRL…QQQQ. Residues 71-81 show a composition bias toward low complexity; it reads QQQQQQLLQQQ. The segment at 204 to 451 is dimerization; sequence PAENCITYWR…EQKIGPIEGL (248 aa). Positions 213–227 match the Nuclear localization signal motif; that stretch reads RKFVAEYFSPRAKQR. Positions 572–587 are enriched in polar residues; the sequence is NAMNNPNSNTGKQEGF. Disordered stretches follow at residues 572-653 and 667-712; these read NAMN…GNTP and ENGG…NNSF. Over residues 588–606 the composition is skewed to low complexity; sequence SSQNPTPNSNQSPSSSSQQ. The span at 615 to 653 shows a compositional bias: polar residues; sequence FPNSPQMQQQQRTMNGPTNILPQNHPHQLQSPHSHGNTP. Positions 667-686 are enriched in low complexity; it reads ENGGSVQQQQAFSGQSGSNS. Polar residues predominate over residues 687–699; it reads NAERNTTASTSNI.

This sequence belongs to the adn1/SEU family. In terms of assembly, forms corepressor complexes with LUH; LUH is the transcription repressor subunit and SLK1 the specific DNA-binding adapters. As to expression, expressed in young flower meristems, ovules and the carpel margin meristem.

The protein localises to the nucleus. Functionally, probable transcription regulator that functions in the development of the carpel margin meristem similarly to SEUSS (SEU). In association with SEU, supports organ development from meristematic regions by facilitating auxin response and thus organ initiation, and by sustaining meristematic potential through the maintenance of PHABULOSA expression. DNA-binding adapter subunit of the SEU-SLK1 transcriptional corepressor of abiotic stress (e.g. salt and osmotic stress) response genes. This Arabidopsis thaliana (Mouse-ear cress) protein is Probable transcriptional regulator SLK1 (SLK1).